Here is a 528-residue protein sequence, read N- to C-terminus: UDP-glucuronosyltransferase 2B30 (528 aa).

An N-terminal signal peptide occupies residues 1–23; sequence MSMKWTSALLLIQLSCYLSSGNC. Lys-135 bears the N6-succinyllysine mark. Asn-315 carries N-linked (GlcNAc...) asparagine glycosylation. A helical membrane pass occupies residues 493–513; sequence VIGFLLACVATVIFIITKCLF.

Belongs to the UDP-glycosyltransferase family. As to expression, expressed in several tissues, including prostate, testis, mammary gland, kidney, adrenals and intestine.

Its subcellular location is the microsome membrane. The protein resides in the endoplasmic reticulum membrane. It carries out the reaction glucuronate acceptor + UDP-alpha-D-glucuronate = acceptor beta-D-glucuronoside + UDP + H(+). Its function is as follows. UDPGTs are of major importance in the conjugation and subsequent elimination of potentially toxic xenobiotics and endogenous compounds. This isozyme has glucuronidating capacity on testosterone, dihydrotestosterone, 5-alpha-androstane-3-alpha,17-beta-diol, androsterone, oestradiol, tetrahydroaldosterone and tetrahydrocortisone. This enzyme is essential to inactivation of several steroids. The chain is UDP-glucuronosyltransferase 2B30 (UGT2B30) from Macaca fascicularis (Crab-eating macaque).